The primary structure comprises 487 residues: Solute carrier family 22 member 15-like (487 aa).

Residues 23-43 (FLTLLQIYVACQSMLIVLVGA) traverse the membrane as a helical segment. Asn70 carries N-linked (GlcNAc...) asparagine glycosylation. 11 helical membrane-spanning segments follow: residues 90–110 (LASS…GPLS), 117–137 (PVYL…ALAP), 141–161 (VFAV…LVSF), 178–198 (SLTN…GFYI), 203–223 (TLAF…FVLP), 286–306 (ILLM…TLNA), 315–335 (LNVA…LYFI), 345–365 (ATAG…FVPE), 374–394 (TVLA…VYIY), 408–428 (LGVC…IPAM), and 435–455 (MPFV…LLLP).

Belongs to the major facilitator (TC 2.A.1) superfamily. Organic cation transporter (TC 2.A.1.19) family.

The protein resides in the membrane. Probably transports organic cations. The protein is Solute carrier family 22 member 15-like (slc22a15b) of Xenopus laevis (African clawed frog).